The chain runs to 729 residues: Isocitrate dehydrogenase [NADP] (729 aa).

NADP(+) is bound by residues asparagine 83 and serine 85. D-threo-isocitrate-binding residues include serine 121, asparagine 124, arginine 128, arginine 134, and lysine 244. Asparagine 124 is a binding site for NADP(+). Residue aspartate 337 coordinates Mg(2+). Tyrosine 407 and arginine 534 together coordinate D-threo-isocitrate. 2 residues coordinate Mg(2+): aspartate 535 and aspartate 539. NADP(+) is bound by residues serine 572, histidine 576, arginine 587, aspartate 589, and arginine 636.

It belongs to the monomeric-type IDH family. Monomer. Mg(2+) is required as a cofactor. Requires Mn(2+) as cofactor.

It catalyses the reaction D-threo-isocitrate + NADP(+) = 2-oxoglutarate + CO2 + NADPH. In terms of biological role, catalyzes the oxidative decarboxylation of isocitrate to 2-oxoglutarate and carbon dioxide with the concomitant reduction of NADP(+). This Corynebacterium efficiens (strain DSM 44549 / YS-314 / AJ 12310 / JCM 11189 / NBRC 100395) protein is Isocitrate dehydrogenase [NADP].